A 352-amino-acid chain; its full sequence is Putative hetero-Diels-Alderase (352 aa).

A signal peptide spans Met1–Thr20. N-linked (GlcNAc...) asparagine glycosylation is found at Asn26, Asn41, Asn47, Asn135, Asn211, and Asn310.

This sequence belongs to the eupF Diels-Alderase family.

It participates in secondary metabolite biosynthesis; terpenoid biosynthesis. In terms of biological role, putative hetero-Diels-Alderase; part of the gene cluster that mediates the biosynthesis of eupenifeldin, a bistropolone meroterpenoid that acts as an antitumor agent. The first step of eupenifeldin biosynthesis is the biosynthesis of 3-methylorcinaldehyde performed by the non-reducing polyketide synthase eupA. Oxidative dearomatization of 3-methylorcinaldehyde likely catalyzed by the FAD-dependent monooxygenase eupB is followed by oxidative ring expansion by the 2-oxoglutarate-dependent dioxygenase eupC to provide the first tropolone metabolite, tropolone stipitaldehyde. In parallel, generation of sesquiterpene alpha-humulene from farnesylpyrophosphate (FPP) is catalyzed by the terpene cyclase eupE. The cytochrome P450 monooxygenase eupD then hydroxylates humulene to humulenol. The putative Diels-Alderase eupF probably catalyzes the formation of the tropolone-humulene skeleton by linking humulenol and the polyketide moiety. The short-chain dehydrogenase/reductase eupG and the flavin-dependent monooxygenase eupH are also essential for eupenifeldin biosynthesis and are likely the additional decorating enzymes of the tropolone-humulene skeleton to produce final eupenifeldin or derivatives. The chain is Putative hetero-Diels-Alderase from Phoma sp.